The following is a 62-amino-acid chain: Large ribosomal subunit protein bL28 (62 aa).

Belongs to the bacterial ribosomal protein bL28 family.

The protein is Large ribosomal subunit protein bL28 of Onion yellows phytoplasma (strain OY-M).